We begin with the raw amino-acid sequence, 544 residues long: Prolyl 4-hydroxylase subunit alpha-3 (544 aa).

Residues 1–19 (MGPGARLAALLAVLALGTG) form the signal peptide. Residues 107–131 (LEASENIRALKDGYEKVEQDLPAFE) adopt a coiled-coil conformation. Residues 227–260 (EDALDHLAFAYFRAGNVSCALSLSREFLLYSPDN) form a TPR repeat. Asparagine 242 is a glycosylation site (N-linked (GlcNAc...) asparagine). The Fe2OG dioxygenase domain maps to 422-529 (YAEYLQVVNY…KWVANKWIHE (108 aa)). Fe cation contacts are provided by histidine 440 and aspartate 442. Asparagine 482 carries N-linked (GlcNAc...) asparagine glycosylation. Residue histidine 510 participates in Fe cation binding. A 2-oxoglutarate-binding site is contributed by lysine 520.

The protein belongs to the P4HA family. In terms of assembly, heterotetramer of two alpha-3 chains and two beta chains (the beta chain is the multi-functional PDI). Fe(2+) serves as cofactor. Requires L-ascorbate as cofactor. Post-translationally, N-glycosylation plays no role in the catalytic activity. In terms of tissue distribution, highly expressed in placenta, liver and fetal skin. Weakly expressed in fetal epiphyseal cartilage, fetal liver, fibroblast, lung and skeletal muscle. Expressed also in fibrous cap of carotid atherosclerotic lesions.

The protein resides in the endoplasmic reticulum lumen. It catalyses the reaction L-prolyl-[collagen] + 2-oxoglutarate + O2 = trans-4-hydroxy-L-prolyl-[collagen] + succinate + CO2. Functionally, catalyzes the post-translational formation of 4-hydroxyproline in -Xaa-Pro-Gly- sequences in collagens and other proteins. This is Prolyl 4-hydroxylase subunit alpha-3 (P4HA3) from Homo sapiens (Human).